The chain runs to 103 residues: Cobalt transport protein CbiN (103 aa).

The next 2 helical transmembrane spans lie at 6 to 26 and 68 to 88; these read VLTNVILLLLVVFITIIPFFV and LLFALQAAIGAGVIGFGLGYL.

It belongs to the CbiN family. Forms an energy-coupling factor (ECF) transporter complex composed of an ATP-binding protein (A component, CbiO), a transmembrane protein (T component, CbiQ) and 2 possible substrate-capture proteins (S components, CbiM and CbiN) of unknown stoichimetry.

It is found in the cell membrane. It functions in the pathway cofactor biosynthesis; adenosylcobalamin biosynthesis. Its function is as follows. Part of the energy-coupling factor (ECF) transporter complex CbiMNOQ involved in cobalt import. This Clostridium perfringens (strain 13 / Type A) protein is Cobalt transport protein CbiN.